The following is a 343-amino-acid chain: Methionine import ATP-binding protein MetN 1 (343 aa).

An ABC transporter domain is found at 2–241 (IKLSNITKVF…PKTPLAQKFI (240 aa)). Residue 38–45 (GASGAGKS) participates in ATP binding.

It belongs to the ABC transporter superfamily. Methionine importer (TC 3.A.1.24) family. As to quaternary structure, the complex is composed of two ATP-binding proteins (MetN), two transmembrane proteins (MetI) and a solute-binding protein (MetQ).

The protein resides in the cell inner membrane. The enzyme catalyses L-methionine(out) + ATP + H2O = L-methionine(in) + ADP + phosphate + H(+). It carries out the reaction D-methionine(out) + ATP + H2O = D-methionine(in) + ADP + phosphate + H(+). Functionally, part of the ABC transporter complex MetNIQ involved in methionine import. Responsible for energy coupling to the transport system. The polypeptide is Methionine import ATP-binding protein MetN 1 (Salmonella choleraesuis (strain SC-B67)).